The chain runs to 875 residues: MSKSTAEIRQAFLDFFHSKGHQVVSSSSLVPNNDPTLLFTNAGMNQFKDVFLGLDKRAYSRATTSQRCVRAGGKHNDLENVGYTARHHTFFEMLGNFSFGDYFKHDAINFAWELLTSEQWFNLPKEKLWVTVYETDDEAYNIWANEVGVPHERIIRIGDNKGGAFASDNFWQMGDTGPCGPCSEIFFDHGDHIWGGPPGSAEEDGDRYIEIWNIVFMQFNRQSDGTMLPLPKPSVDTGMGLERIAAVLQHVNSNYEIDLFRDLIAAVADVTGATDLSSKSLRVIADHIRSCAFLISDGVIPSNENRGYVLRRIIRRAIRHGNMLGAKETFFYKLVAPLIAVMGPAAAELKQQQAMVEQVLKTEEEQFARTLERGLALLDDELSKLTGDTLDGETAFRLYDTYGFPVDLTADVCRERNLKVDEAGFEQAMEAQRRRARESSGFGADYNSLIRVDSASQFSGYDHVQQHATVTALFRNGEAVDEIHAGEEAVVVLNRTPFYGESGGQVGDKGELKNATATFSVTDTQKYGQAIGHVGILTTGTLRVNHSVEALVDVVRRNRIRLNHSATHLLHAALRNVLGEHVAQKGSLVNDKYLRFDFSHFEAMKPEQIRLVEDLVNEQIRRNMPVQTEVMELDAAKEKGAMALFGEKYDDQVRVLTMGDFSTELCGGTHASRTGDIGLFRILTESGTAAGIRRIEAVTGEGAIALLHQQSDLLQDVAHLVKGDIHNLADKVRAVLDRSKMLERELQQLKDQQAAQESASLSSSAKLINGVKLLVSQLDNVEPKMLRTMVDDLKNQLGSAIIVLATTADDKVSLIVGVTKDLTGKVKAGELIADIAQQVGGKGGGRPDMAQAGGTDVQALPAALASVEAWVASRM.

The Zn(2+) site is built by His564, His568, Cys666, and His670.

It belongs to the class-II aminoacyl-tRNA synthetase family. As to quaternary structure, homotetramer. Zn(2+) is required as a cofactor.

It localises to the cytoplasm. The catalysed reaction is tRNA(Ala) + L-alanine + ATP = L-alanyl-tRNA(Ala) + AMP + diphosphate. Its function is as follows. Catalyzes the attachment of alanine to tRNA(Ala) in a two-step reaction: alanine is first activated by ATP to form Ala-AMP and then transferred to the acceptor end of tRNA(Ala). Also edits incorrectly charged Ser-tRNA(Ala) and Gly-tRNA(Ala) via its editing domain. In Yersinia pseudotuberculosis serotype IB (strain PB1/+), this protein is Alanine--tRNA ligase.